We begin with the raw amino-acid sequence, 600 residues long: Putative heme-binding protein NP_2262A (600 aa).

Heme is bound at residue His180. Residues 261-289 (TSETGHGGADSQTSSESSGGRPSTDPSHD) form a disordered region. The segment covering 270-285 (DSQTSSESSGGRPSTD) has biased composition (polar residues). Residues 510-598 (GTMGMFYTVK…VLADRPRHVF (89 aa)) form the ABM domain.

This sequence in the N-terminal section; belongs to the ChdC family.

The polypeptide is Putative heme-binding protein NP_2262A (Natronomonas pharaonis (strain ATCC 35678 / DSM 2160 / CIP 103997 / JCM 8858 / NBRC 14720 / NCIMB 2260 / Gabara) (Halobacterium pharaonis)).